Consider the following 675-residue polypeptide: MVAPAPAKERIQALKELINNYDYAYYVVNNPLVPDSEYDRLIRELQALEENYPELITLDSPTQRVGAKPVKSLGEIKHEIPMLSLNNAFHEGELADFHRRVKTRLGIERVDYAAEPKLDGLAVSLLYQDGVLVQGATRGDGITGEDITHNIRTIPTVSLRLRGEKIPSLLEVRGEVYMPRQGFEQFNREQIAKGEKPFVNPRNAAAGSLRQLDPRITANRPLALFCYGVGQVEGGILPDRHSEILFQLKQWGLRILPYSEVVEELAGCEKYYQHLLDLRDKLPYEIDGVVFKVDYLDQQQILGSLARAPRWALAYKFPAQEELTQILDIEVQVGRTGALTPVARLQPVFVGGVTVSKATLHNEGEIQRKDIRIGDTVYVRRAGDVIPEIVKVIMERRLPDSRPFQMPRQCPVCGSEIVKEEGGAVARCSGGLYCPAQRKEAIKHFAGRRAMDINGLGDKLVEQLTKQGLLKDVADLYGLTKEQLAGLERMGQKSATNLINAIQQSKHTTLPRFLYALGIREVGEATAQVLAKEFGSLEALASVSEERLQQVTDIGPIVAAHIAAFFRQPHNRQIIQGLQKAGVCWPEVEDKVQIVQPLLGRTFVLTGTLESMTREQAKERLQALGGKVNGSVSPHTDYLIIGANPGSKLVKARNLGITILDETYFRNFLDDTSFP.

NAD(+) contacts are provided by residues aspartate 35–aspartate 39, serine 84–leucine 85, and glutamate 115. Lysine 117 (N6-AMP-lysine intermediate) is an active-site residue. Positions 138, 175, 292, and 316 each coordinate NAD(+). Cysteine 410, cysteine 413, cysteine 428, and cysteine 434 together coordinate Zn(2+). Residues glutamine 593–proline 675 form the BRCT domain.

The protein belongs to the NAD-dependent DNA ligase family. LigA subfamily. The cofactor is Mg(2+). It depends on Mn(2+) as a cofactor.

The enzyme catalyses NAD(+) + (deoxyribonucleotide)n-3'-hydroxyl + 5'-phospho-(deoxyribonucleotide)m = (deoxyribonucleotide)n+m + AMP + beta-nicotinamide D-nucleotide.. In terms of biological role, DNA ligase that catalyzes the formation of phosphodiester linkages between 5'-phosphoryl and 3'-hydroxyl groups in double-stranded DNA using NAD as a coenzyme and as the energy source for the reaction. It is essential for DNA replication and repair of damaged DNA. The chain is DNA ligase from Nitrosococcus oceani (strain ATCC 19707 / BCRC 17464 / JCM 30415 / NCIMB 11848 / C-107).